The sequence spans 252 residues: PF03932 family protein CutC (252 aa).

Belongs to the CutC family.

It localises to the cytoplasm. This is PF03932 family protein CutC from Pectobacterium atrosepticum (strain SCRI 1043 / ATCC BAA-672) (Erwinia carotovora subsp. atroseptica).